A 154-amino-acid chain; its full sequence is uncharacterized protein (154 aa).

The HotDog ACOT-type domain occupies 13–128 (SKGVLLLRTL…VFTFVAVDNN (116 aa)).

The protein belongs to the acyl coenzyme A hydrolase family.

This is an uncharacterized protein from Haemophilus influenzae (strain ATCC 51907 / DSM 11121 / KW20 / Rd).